The primary structure comprises 47 residues: Delta-actitoxin-Axm1g (47 aa).

3 disulfide bridges follow: Cys4-Cys44, Cys6-Cys34, and Cys27-Cys45.

The protein belongs to the sea anemone sodium channel inhibitory toxin family. Type I subfamily.

The protein resides in the secreted. It localises to the nematocyst. This is Delta-actitoxin-Axm1g from Anthopleura xanthogrammica (Giant green sea anemone).